Reading from the N-terminus, the 833-residue chain is Protein translocase subunit SecA (833 aa).

Residues Gln87, 105 to 109 (GEGKT), and Asp494 each bind ATP. The segment at 789-816 (PAAVAYSGGEAEAGPAQPHREDPKVGRN) is disordered. Positions 806–815 (PHREDPKVGR) are enriched in basic and acidic residues. The Zn(2+) site is built by Cys819, Cys821, Cys830, and Cys831.

Belongs to the SecA family. In terms of assembly, monomer and homodimer. Part of the essential Sec protein translocation apparatus which comprises SecA, SecYEG and auxiliary proteins SecDF-YajC and YidC. It depends on Zn(2+) as a cofactor.

It localises to the cell inner membrane. The protein localises to the cytoplasm. It carries out the reaction ATP + H2O + cellular proteinSide 1 = ADP + phosphate + cellular proteinSide 2.. Its function is as follows. Part of the Sec protein translocase complex. Interacts with the SecYEG preprotein conducting channel. Has a central role in coupling the hydrolysis of ATP to the transfer of proteins into and across the cell membrane, serving as an ATP-driven molecular motor driving the stepwise translocation of polypeptide chains across the membrane. This chain is Protein translocase subunit SecA, found in Nitratidesulfovibrio vulgaris (strain DP4) (Desulfovibrio vulgaris).